The sequence spans 29 residues: Dander allergen Equ c 2.0101 (29 aa).

It belongs to the calycin superfamily. Lipocalin family.

Its subcellular location is the secreted. This chain is Dander allergen Equ c 2.0101, found in Equus caballus (Horse).